The sequence spans 133 residues: Small ribosomal subunit protein uS8 (133 aa).

Belongs to the universal ribosomal protein uS8 family. Part of the 30S ribosomal subunit. Contacts proteins S5 and S12.

Its function is as follows. One of the primary rRNA binding proteins, it binds directly to 16S rRNA central domain where it helps coordinate assembly of the platform of the 30S subunit. In Salinibacter ruber (strain DSM 13855 / M31), this protein is Small ribosomal subunit protein uS8.